Consider the following 98-residue polypeptide: Glutaredoxin 1 (98 aa).

One can recognise a Glutaredoxin domain in the interval M1 to D98. C17 and C20 are joined by a disulfide.

The protein belongs to the glutaredoxin family. In terms of assembly, monomer.

It is found in the cytoplasm. Has a glutathione-disulfide oxidoreductase activity in the presence of NADPH and glutathione reductase. Reduces low molecular weight disulfides and proteins. This Rickettsia bellii (strain RML369-C) protein is Glutaredoxin 1 (grxC1).